A 316-amino-acid polypeptide reads, in one-letter code: 4-hydroxy-3-methylbut-2-enyl diphosphate reductase (316 aa).

Cys12 is a binding site for [4Fe-4S] cluster. Positions 41 and 74 each coordinate (2E)-4-hydroxy-3-methylbut-2-enyl diphosphate. Residues His41 and His74 each contribute to the dimethylallyl diphosphate site. Isopentenyl diphosphate is bound by residues His41 and His74. Residue Cys96 coordinates [4Fe-4S] cluster. Residue His124 coordinates (2E)-4-hydroxy-3-methylbut-2-enyl diphosphate. His124 serves as a coordination point for dimethylallyl diphosphate. Residue His124 coordinates isopentenyl diphosphate. Glu126 serves as the catalytic Proton donor. Thr167 is a (2E)-4-hydroxy-3-methylbut-2-enyl diphosphate binding site. [4Fe-4S] cluster is bound at residue Cys197. Ser225, Ser226, Asn227, and Ser269 together coordinate (2E)-4-hydroxy-3-methylbut-2-enyl diphosphate. Dimethylallyl diphosphate is bound by residues Ser225, Ser226, Asn227, and Ser269. Isopentenyl diphosphate is bound by residues Ser225, Ser226, Asn227, and Ser269.

The protein belongs to the IspH family. In terms of assembly, homodimer. [4Fe-4S] cluster is required as a cofactor.

It catalyses the reaction isopentenyl diphosphate + 2 oxidized [2Fe-2S]-[ferredoxin] + H2O = (2E)-4-hydroxy-3-methylbut-2-enyl diphosphate + 2 reduced [2Fe-2S]-[ferredoxin] + 2 H(+). The enzyme catalyses dimethylallyl diphosphate + 2 oxidized [2Fe-2S]-[ferredoxin] + H2O = (2E)-4-hydroxy-3-methylbut-2-enyl diphosphate + 2 reduced [2Fe-2S]-[ferredoxin] + 2 H(+). Its pathway is isoprenoid biosynthesis; dimethylallyl diphosphate biosynthesis; dimethylallyl diphosphate from (2E)-4-hydroxy-3-methylbutenyl diphosphate: step 1/1. The protein operates within isoprenoid biosynthesis; isopentenyl diphosphate biosynthesis via DXP pathway; isopentenyl diphosphate from 1-deoxy-D-xylulose 5-phosphate: step 6/6. In terms of biological role, catalyzes the conversion of 1-hydroxy-2-methyl-2-(E)-butenyl 4-diphosphate (HMBPP) into a mixture of isopentenyl diphosphate (IPP) and dimethylallyl diphosphate (DMAPP). Acts in the terminal step of the DOXP/MEP pathway for isoprenoid precursor biosynthesis. This Salmonella paratyphi C (strain RKS4594) protein is 4-hydroxy-3-methylbut-2-enyl diphosphate reductase.